A 211-amino-acid chain; its full sequence is Glutathione S-transferase (211 aa).

A GST N-terminal domain is found at 3–87; that stretch reads DNIVLYYFDA…YLSKKYNICG (85 aa). Residues 58 to 59, 71 to 72, aspartate 105, lysine 117, and threonine 121 contribute to the glutathione site; these read QV and QS. The GST C-terminal domain occupies 89–211; sequence SELNEFYADM…YITNRKESVY (123 aa).

It belongs to the GST superfamily. Homodimer. In the absence of ligands two homodimers may interact to form a tetramer.

The enzyme catalyses RX + glutathione = an S-substituted glutathione + a halide anion + H(+). Its activity is regulated as follows. Inhibited by chloroquine, cibacron blue, ferriprotoporphyrin IX (hemin) and S-hexylglutathione. Functionally, conjugation of reduced glutathione to a wide number of exogenous and endogenous hydrophobic electrophiles. May also function as a storage protein or ligandin for parasitotoxic ferriprotoporphyrin IX (hemin). The polypeptide is Glutathione S-transferase (Plasmodium falciparum (isolate 3D7)).